The following is a 619-amino-acid chain: Chaperone protein HscA homolog (619 aa).

This sequence belongs to the heat shock protein 70 family.

Functionally, chaperone involved in the maturation of iron-sulfur cluster-containing proteins. Has a low intrinsic ATPase activity which is markedly stimulated by HscB. In Azotobacter vinelandii, this protein is Chaperone protein HscA homolog.